Reading from the N-terminus, the 255-residue chain is Large ribosomal subunit protein uL4 (255 aa).

It belongs to the universal ribosomal protein uL4 family. In terms of assembly, part of the 50S ribosomal subunit.

In terms of biological role, one of the primary rRNA binding proteins, this protein initially binds near the 5'-end of the 23S rRNA. It is important during the early stages of 50S assembly. It makes multiple contacts with different domains of the 23S rRNA in the assembled 50S subunit and ribosome. Its function is as follows. Forms part of the polypeptide exit tunnel. The polypeptide is Large ribosomal subunit protein uL4 (Thermococcus onnurineus (strain NA1)).